A 368-amino-acid polypeptide reads, in one-letter code: Spermidine/putrescine import ATP-binding protein PotA (368 aa).

Residues 8–238 enclose the ABC transporter domain; sequence IELRGVTKNF…PANLYVARFV (231 aa). 40–47 lines the ATP pocket; that stretch reads GPSGCGKT.

It belongs to the ABC transporter superfamily. Spermidine/putrescine importer (TC 3.A.1.11.1) family. In terms of assembly, the complex is composed of two ATP-binding proteins (PotA), two transmembrane proteins (PotB and PotC) and a solute-binding protein (PotD).

It localises to the cell inner membrane. The enzyme catalyses ATP + H2O + polyamine-[polyamine-binding protein]Side 1 = ADP + phosphate + polyamineSide 2 + [polyamine-binding protein]Side 1.. Part of the ABC transporter complex PotABCD involved in spermidine/putrescine import. Responsible for energy coupling to the transport system. The sequence is that of Spermidine/putrescine import ATP-binding protein PotA from Nitratidesulfovibrio vulgaris (strain ATCC 29579 / DSM 644 / CCUG 34227 / NCIMB 8303 / VKM B-1760 / Hildenborough) (Desulfovibrio vulgaris).